The chain runs to 339 residues: Heat-inducible transcription repressor HrcA (339 aa).

The protein belongs to the HrcA family.

Negative regulator of class I heat shock genes (grpE-dnaK-dnaJ and groELS operons). Prevents heat-shock induction of these operons. This is Heat-inducible transcription repressor HrcA from Paraburkholderia phymatum (strain DSM 17167 / CIP 108236 / LMG 21445 / STM815) (Burkholderia phymatum).